The chain runs to 579 residues: MAGINGAGPSGAYFVGHTDPEPASGGAHGSSSGASSSNSPRLPAPPDAPASQARDRREMLLRARPLSRQTREWVAQGMPPTAEAGVPIRPQESAEAAAPQARAEERHTPEADAAASHVRTEGGRTPQALAGTSPRHTGAVPHANRIVQQLVDAGADLAGINTMIDNAMRRHAIALPSRTVQSILIEHFPHLLAGELISGSELATAFRAALRREVRQQEASAPPRTAARSSVRTPERSTVPPTSTESSSGSNQRTLLGRFAGLMTPNQRRPSSASNASASQRPVDRSPPRVNQVPTGANRVVMRNHGNNEADAALQGLAQQGVDMEDLRAALERHILHRRPIPMDIAYALQGVGIAPSIDTGESLMENPLMNLSVALHRALGPRPARAQAPRPAVPVAPATVSRRPDSARATRLQVIPAREDYENNVAYGVRLLSLNPGAGVRETVAAFVNNRYERQAVVADIRAALNLSKQFNKLRTVSKADAASNKPGFKDLADHPDDATQCLFGEELSLTSSVQQVIGLAGKATDMSESYSREANKDLVFMDMKKLAQFLAGKPEHPMTRETLNAENIAKYAFRIVP.

Disordered stretches follow at residues 1-140 (MAGI…TGAV), 214-294 (VRQQ…NQVP), and 384-408 (PARAQAPRPAVPVAPATVSRRPDSA). The segment at 1–336 (MAGINGAGPS…LRAALERHIL (336 aa)) is host recognition; Pto interaction. 5 stretches are compositionally biased toward low complexity: residues 23 to 39 (ASGGAHGSSSGASSSNS), 89 to 101 (RPQESAEAAAPQA), 219 to 248 (ASAPPRTAARSSVRTPERSTVPPTSTESSS), 266 to 281 (NQRRPSSASNASASQR), and 384 to 402 (PARAQAPRPAVPVAPATVS). Residues 337–579 (HRRPIPMDIA…IAKYAFRIVP (243 aa)) form an E3 ubiquitin-protein ligase region.

It belongs to the HopAB family. In terms of assembly, interacts physically with plant cell Pto. Auto-ubiquitinated.

The protein resides in the secreted. Effector protein involved in gene-for-gene resistance in tomato plants. It is recognized by the host Pto resistance protein and elicits Pto and Prf-dependent hypersensitive response (HR) and programmed cell death (PCD), resulting in host immunity. In susceptible plants, acts as a virulence factor by suppressing PCD and HR-based plant immunity. This function requires its E3 ubiquitin ligase activity probably by recruiting E2 enzymes and transferring ubiquitin molecules to cellular proteins involved in regulation of PCD and targeting them for degradation. Enhances the development of disease symptoms and bacterial growth. The chain is Effector protein HopAB3 (hopAB3) from Pseudomonas syringae pv. tomato.